Reading from the N-terminus, the 574-residue chain is Proline--tRNA ligase (574 aa).

Belongs to the class-II aminoacyl-tRNA synthetase family. ProS type 1 subfamily. As to quaternary structure, homodimer.

It localises to the cytoplasm. The enzyme catalyses tRNA(Pro) + L-proline + ATP = L-prolyl-tRNA(Pro) + AMP + diphosphate. Functionally, catalyzes the attachment of proline to tRNA(Pro) in a two-step reaction: proline is first activated by ATP to form Pro-AMP and then transferred to the acceptor end of tRNA(Pro). As ProRS can inadvertently accommodate and process non-cognate amino acids such as alanine and cysteine, to avoid such errors it has two additional distinct editing activities against alanine. One activity is designated as 'pretransfer' editing and involves the tRNA(Pro)-independent hydrolysis of activated Ala-AMP. The other activity is designated 'posttransfer' editing and involves deacylation of mischarged Ala-tRNA(Pro). The misacylated Cys-tRNA(Pro) is not edited by ProRS. This chain is Proline--tRNA ligase, found in Marinomonas sp. (strain MWYL1).